Consider the following 314-residue polypeptide: Methionyl-tRNA formyltransferase (314 aa).

110–113 (SLLP) is a (6S)-5,6,7,8-tetrahydrofolate binding site.

This sequence belongs to the Fmt family.

The catalysed reaction is L-methionyl-tRNA(fMet) + (6R)-10-formyltetrahydrofolate = N-formyl-L-methionyl-tRNA(fMet) + (6S)-5,6,7,8-tetrahydrofolate + H(+). Its function is as follows. Attaches a formyl group to the free amino group of methionyl-tRNA(fMet). The formyl group appears to play a dual role in the initiator identity of N-formylmethionyl-tRNA by promoting its recognition by IF2 and preventing the misappropriation of this tRNA by the elongation apparatus. This is Methionyl-tRNA formyltransferase from Lactobacillus acidophilus (strain ATCC 700396 / NCK56 / N2 / NCFM).